The following is a 370-amino-acid chain: Flagellar P-ring protein (370 aa).

A signal peptide spans 1–21; that stretch reads MRLFSVVLAVFTLLLPSQAFA.

This sequence belongs to the FlgI family. As to quaternary structure, the basal body constitutes a major portion of the flagellar organelle and consists of four rings (L,P,S, and M) mounted on a central rod.

The protein localises to the periplasm. Its subcellular location is the bacterial flagellum basal body. In terms of biological role, assembles around the rod to form the L-ring and probably protects the motor/basal body from shearing forces during rotation. The polypeptide is Flagellar P-ring protein (Alteromonas mediterranea (strain DSM 17117 / CIP 110805 / LMG 28347 / Deep ecotype)).